A 607-amino-acid polypeptide reads, in one-letter code: Elongation factor 4 (607 aa).

One can recognise a tr-type G domain in the interval 11-193 (KNIRNFSIIA…KIVEVVPPPE (183 aa)). GTP is bound by residues 23 to 28 (DHGKST) and 140 to 143 (NKID).

It belongs to the TRAFAC class translation factor GTPase superfamily. Classic translation factor GTPase family. LepA subfamily.

It localises to the cell membrane. The enzyme catalyses GTP + H2O = GDP + phosphate + H(+). Functionally, required for accurate and efficient protein synthesis under certain stress conditions. May act as a fidelity factor of the translation reaction, by catalyzing a one-codon backward translocation of tRNAs on improperly translocated ribosomes. Back-translocation proceeds from a post-translocation (POST) complex to a pre-translocation (PRE) complex, thus giving elongation factor G a second chance to translocate the tRNAs correctly. Binds to ribosomes in a GTP-dependent manner. This chain is Elongation factor 4, found in Staphylococcus saprophyticus subsp. saprophyticus (strain ATCC 15305 / DSM 20229 / NCIMB 8711 / NCTC 7292 / S-41).